A 226-amino-acid polypeptide reads, in one-letter code: Elongation factor 1-delta (226 aa).

The interval Ser82 to Lys131 is disordered. Over residues Ala97 to Glu113 the composition is skewed to acidic residues. Residues Glu114 to Ala124 are compositionally biased toward basic and acidic residues.

This sequence belongs to the EF-1-beta/EF-1-delta family. EF-1 is composed of 4 subunits: alpha, beta (1B-alpha=beta'), delta (1B-beta), and gamma (1B-gamma).

Functionally, EF-1-beta and EF-1-beta' stimulate the exchange of GDP bound to EF-1-alpha to GTP. In Spuriopimpinella brachycarpa (Chamnamul), this protein is Elongation factor 1-delta.